The primary structure comprises 290 residues: MADSKQSNRDWAADDVDADELPPTTESTDANGITTIVSWKYNADDQKVKVTRRVRRRLQVSTVTQTMAERKQWPKFGLDKGKPPGPDRKTTIIGENLHFKIAPISKIQRVEPEPETAVKAPTGKAVVCRLCSGQHYTARCPFREQLAAIDNLNADGAEEEQVVVSGTLAAKGAGETGGKYVPPSQRAGATGAGDSMFRARDELPTLRVTSLSIDAEEDDLRALFQPFAKNGKLGRANIVRDRNTRVSKGLAFVSFESKRDAEAAMAHLNGRGYDSLILEVAWSQPRGERT.

Residues 1 to 12 (MADSKQSNRDWA) are compositionally biased toward basic and acidic residues. Disordered regions lie at residues 1–30 (MADS…STDA) and 173–192 (AGET…ATGA). The RRM domain occupies 204–285 (PTLRVTSLSI…LILEVAWSQP (82 aa)).

The protein belongs to the eIF-3 subunit G family. In terms of assembly, component of the eukaryotic translation initiation factor 3 (eIF-3) complex.

The protein resides in the cytoplasm. Its function is as follows. RNA-binding component of the eukaryotic translation initiation factor 3 (eIF-3) complex, which is involved in protein synthesis of a specialized repertoire of mRNAs and, together with other initiation factors, stimulates binding of mRNA and methionyl-tRNAi to the 40S ribosome. The eIF-3 complex specifically targets and initiates translation of a subset of mRNAs involved in cell proliferation. This subunit can bind 18S rRNA. The sequence is that of Eukaryotic translation initiation factor 3 subunit G from Cryptococcus neoformans var. neoformans serotype D (strain B-3501A) (Filobasidiella neoformans).